Consider the following 285-residue polypeptide: MCDAQDWFTESYPDNGSALSLKIRAKLHEEQTPFQRIEIYDTESFGKLMVIDGCTMVSDRDNFLYHEMMTHPVLYTHPAPKTVWIIGGGDCGSLREVLKHSEVEKAVQIDIDERVTRLAERYFPELCEANGDPRAELLFIDGIQWVKEAPDGCVDVIIVDSTDPVGPAEGLFNEAFFRQCHRCLRTDGILVQQSESPLFHLPLIASMHRIMRQAGFAQTRTLFFPQFIYPSGWWSATMAGKGDLNRFRADAAEAKLFPTRYYNADIHRAAFAVPEFFGDALRELV.

One can recognise a PABS domain in the interval Gln-5–Lys-241. Gln-35 provides a ligand contact to S-methyl-5'-thioadenosine. Spermidine-binding residues include His-66 and Asp-90. Residues Asp-110 and Asp-141–Gly-142 each bind S-methyl-5'-thioadenosine. The Proton acceptor role is filled by Asp-160. Asp-160–Asp-163 is a spermidine binding site. S-methyl-5'-thioadenosine is bound at residue Pro-167.

It belongs to the spermidine/spermine synthase family. As to quaternary structure, homodimer or homotetramer.

The protein localises to the cytoplasm. The enzyme catalyses S-adenosyl 3-(methylsulfanyl)propylamine + putrescine = S-methyl-5'-thioadenosine + spermidine + H(+). It functions in the pathway amine and polyamine biosynthesis; spermidine biosynthesis; spermidine from putrescine: step 1/1. Its function is as follows. Catalyzes the irreversible transfer of a propylamine group from the amino donor S-adenosylmethioninamine (decarboxy-AdoMet) to putrescine (1,4-diaminobutane) to yield spermidine. The polypeptide is Polyamine aminopropyltransferase (Methylococcus capsulatus (strain ATCC 33009 / NCIMB 11132 / Bath)).